Consider the following 293-residue polypeptide: DOMON domain-containing protein FRRS1L (293 aa).

The first 28 residues, 1-28 (MARPPRQHPGVWASLLLLLLTGPAACAA), serve as a signal peptide directing secretion. A disordered region spans residues 29 to 61 (SPADDGAGPGGRGPRGRARGDTGADEAVPRHDS). Residues 46–61 (ARGDTGADEAVPRHDS) show a composition bias toward basic and acidic residues. Residues 119 to 234 (CDYFLSYRMI…WYYLFAWGPA (116 aa)) form the DOMON domain. Residues 271–291 (TFSSPFCLLLIVALTFYLLMG) form a helical membrane-spanning segment.

In terms of assembly, component of the outer core of AMPAR complex. AMPAR complex consists of an inner core made of 4 pore-forming GluA/GRIA proteins (GRIA1, GRIA2, GRIA3 and GRIA4) and 4 major auxiliary subunits arranged in a twofold symmetry. One of the two pairs of distinct binding sites is occupied either by CNIH2, CNIH3 or CACNG2, CACNG3. The other harbors CACNG2, CACNG3, CACNG4, CACNG8 or GSG1L. This inner core of AMPAR complex is complemented by outer core constituents binding directly to the GluA/GRIA proteins at sites distinct from the interaction sites of the inner core constituents. Outer core constituents include at least PRRT1, PRRT2, CKAMP44/SHISA9, FRRS1L and NRN1. The proteins of the inner and outer core serve as a platform for other, more peripherally associated AMPAR constituents. Alone or in combination, these auxiliary subunits control the gating and pharmacology of the AMPAR complex and profoundly impact their biogenesis and protein processing. In terms of tissue distribution, expressed in adult and fetal brain. Very weak expression in medulla, spinal cord and in adult ovary.

It is found in the cell membrane. It localises to the synapse. Functionally, important modulator of glutamate signaling pathway. In Homo sapiens (Human), this protein is DOMON domain-containing protein FRRS1L (FRRS1L).